The following is a 321-amino-acid chain: NADH-ubiquinone oxidoreductase chain 1 (321 aa).

Transmembrane regions (helical) follow at residues 9-29 (ITNS…LTLL), 75-95 (ILFT…WAPM), 106-126 (LGLL…LWSG), 151-171 (TLGL…LMLF), 177-197 (HMWL…STLA), 219-239 (VEFS…NILF), 256-276 (PQLF…LFLW), and 297-317 (YLPL…ALCG).

It belongs to the complex I subunit 1 family.

The protein resides in the mitochondrion inner membrane. The enzyme catalyses a ubiquinone + NADH + 5 H(+)(in) = a ubiquinol + NAD(+) + 4 H(+)(out). Functionally, core subunit of the mitochondrial membrane respiratory chain NADH dehydrogenase (Complex I) that is believed to belong to the minimal assembly required for catalysis. Complex I functions in the transfer of electrons from NADH to the respiratory chain. The immediate electron acceptor for the enzyme is believed to be ubiquinone. The protein is NADH-ubiquinone oxidoreductase chain 1 (MT-ND1) of Lycodon semicarinatus (Ryukyu odd-tooth snake).